The sequence spans 47 residues: Delta-halcutoxin-Hcg1a (47 aa).

Disulfide bonds link C3–C43, C5–C33, and C26–C44.

The protein belongs to the sea anemone sodium channel inhibitory toxin family. Type II subfamily.

The protein resides in the secreted. Its subcellular location is the nematocyst. In terms of biological role, is potently lethal to crabs, although it showed neither lethal activity in mice nor hemolytic activity. May bind to voltage-gated sodium channels (Nav), thereby delaying their inactivation during signal transduction. The chain is Delta-halcutoxin-Hcg1a from Isohalcurias carlgreni (Sea anemone).